Consider the following 124-residue polypeptide: Small ribosomal subunit protein uS12 (124 aa).

The segment at 1–23 is disordered; sequence MATINQLVRKPRRSKVTKSNSAA. Asp-89 bears the 3-methylthioaspartic acid mark.

It belongs to the universal ribosomal protein uS12 family. In terms of assembly, part of the 30S ribosomal subunit. Contacts proteins S8 and S17. May interact with IF1 in the 30S initiation complex.

In terms of biological role, with S4 and S5 plays an important role in translational accuracy. Its function is as follows. Interacts with and stabilizes bases of the 16S rRNA that are involved in tRNA selection in the A site and with the mRNA backbone. Located at the interface of the 30S and 50S subunits, it traverses the body of the 30S subunit contacting proteins on the other side and probably holding the rRNA structure together. The combined cluster of proteins S8, S12 and S17 appears to hold together the shoulder and platform of the 30S subunit. This Pseudoalteromonas translucida (strain TAC 125) protein is Small ribosomal subunit protein uS12.